Consider the following 321-residue polypeptide: MAKQSGADRELVIGSRGSILALWQAEYIKSCLKAQCGLQSRIQIIKTRGDKILDVPLAKIGGKGLFTKELEEMLLSKDIDLAVHSLKDVPVEFVPELDLAAITQRESANDCFLSVNYPNLNALPQGAKVGTTSLRRSMQIKKYRSDLDTLSLRGNVQTRLEKLHNGAFDAIILAQAGVNRLKINTQDVRYIVPLDFMIPAMGQGALGIEMRKDSIFFDRIAVLNDKQSALCVSAERAFVRTLEGGCQVPIGVYAQFSNNKLTLQAIVGLPDGSEVLQDSVEDSINIDDINASENLGIAFAQKFIDKGAKELLERAAKIAFA.

The residue at position 246 (Cys246) is an S-(dipyrrolylmethanemethyl)cysteine.

It belongs to the HMBS family. Monomer. Dipyrromethane serves as cofactor.

The catalysed reaction is 4 porphobilinogen + H2O = hydroxymethylbilane + 4 NH4(+). Its pathway is porphyrin-containing compound metabolism; protoporphyrin-IX biosynthesis; coproporphyrinogen-III from 5-aminolevulinate: step 2/4. Tetrapolymerization of the monopyrrole PBG into the hydroxymethylbilane pre-uroporphyrinogen in several discrete steps. The protein is Porphobilinogen deaminase of Helicobacter hepaticus (strain ATCC 51449 / 3B1).